We begin with the raw amino-acid sequence, 452 residues long: Nebulette (452 aa).

Residues methionine 1–alanine 26 form a disordered region. The span at glutamate 11–asparagine 23 shows a compositional bias: acidic residues. Nebulin repeat units follow at residues serine 29–aspartate 63, lysine 64–serine 98, leucine 101–glycine 135, aspartate 138–threonine 172, tyrosine 173–lysine 199, lysine 206–lysine 240, leucine 263–glycine 278, leucine 279–glycine 313, serine 315–lysine 349, serine 352–lysine 386, glycine 389–lysine 423, and glycine 426–valine 452.

As to quaternary structure, interacts (via nebulin repeats 1-5) with DESM (via rod region). Interacts (via SH3 domain) with XIRP2.

It is found in the cytoplasm. Its function is as follows. Binds to actin and plays an important role in the assembly of the Z-disk. May functionally link sarcomeric actin to the desmin intermediate filaments in the heart muscle sarcomeres. Isoform 2 might play a role in the assembly of focal adhesion. The sequence is that of Nebulette (Nebl) from Mus musculus (Mouse).